A 137-amino-acid polypeptide reads, in one-letter code: Protein LTO1 homolog (137 aa).

Ala-2 is modified (N-acetylalanine). The residue at position 4 (Ser-4) is a Phosphoserine. Positions 22-58 (GYREGYEEGSSLGVMEGRQHGTLHGAKIGSEIGCYQG) are deca-GX3 motif; required for interaction with YAE1 and the CIA complex.

This sequence belongs to the LTO1 family. In terms of assembly, forms a complex with YAE1. Interacts with PYCR1 and PYCR2. As to expression, widely expressed. Highly expressed in placenta, kidney and skeletal muscle.

It localises to the nucleus. The complex LTO1:YAE1 functions as a target specific adapter that probably recruits apo-ABCE1 to the cytosolic iron-sulfur protein assembly (CIA) complex machinery. May be required for biogenesis of the large ribosomal subunit and initiation of translation. May play a role in the regulation of proline metabolism and ROS production. The sequence is that of Protein LTO1 homolog from Homo sapiens (Human).